A 398-amino-acid chain; its full sequence is Vacuolar protease A (398 aa).

The N-terminal stretch at 1–18 (MKSTSLLTASVLLGSASA) is a signal peptide. Residues 19 to 70 (AVHKLKLNKVPLDEQLYTHNIDAHVRALGQKYMGIRPNVHQELLEENSLNDM) constitute a propeptide, activation peptide. In terms of domain architecture, Peptidase A1 spans 85–395 (YFSEISLGTP…DLGNNAVGLA (311 aa)). The active site involves D103. A disulfide bridge connects residues C116 and C121. N-linked (GlcNAc...) asparagine glycosylation is present at N138. The active site involves D287. A disulfide bridge connects residues C321 and C354. N338 is a glycosylation site (N-linked (GlcNAc...) asparagine).

This sequence belongs to the peptidase A1 family.

The protein localises to the vacuole lumen. It is found in the secreted. The enzyme catalyses Hydrolysis of proteins with broad specificity for peptide bonds. Cleaves -Leu-Leu-|-Val-Tyr- bond in a synthetic substrate. Does not act on esters of Tyr or Arg.. Functionally, vacuolar aspartic endopeptidase which is probably also secreted and contributes to virulence. This is Vacuolar protease A (pep2) from Aspergillus fumigatus (strain ATCC MYA-4609 / CBS 101355 / FGSC A1100 / Af293) (Neosartorya fumigata).